Consider the following 94-residue polypeptide: Small ribosomal subunit protein uS19 (94 aa).

Belongs to the universal ribosomal protein uS19 family.

Its function is as follows. Protein S19 forms a complex with S13 that binds strongly to the 16S ribosomal RNA. This Moorella thermoacetica (strain ATCC 39073 / JCM 9320) protein is Small ribosomal subunit protein uS19.